Here is a 326-residue protein sequence, read N- to C-terminus: MTERYADKQIKLFSLTSNLPIAEKIAKAAGIPLGKMSSRQFSDGEIMINIEETVRGDDIYIIQSTSFPVNDNLWELLIMIDACQRASANTVNIVLPYFGYSRQDRVAKPREPITAKLVANMLTKAGIDRVVTLDLHAVQVQGFFDIPVDNLFTVPLFAERYSKLGLSGSDVVVVSPKNSGIKRARSLAEYLDSPIAIIDYAQDDSEREQGYIIGDVSGKKAILIDDILNTGKTFAEAAKILERSGATDTYAVASHGLFAGGAAEVLETAPIKEIIVTDSVKTKNRVPENVTYLSASDLIAEAIIRIHERRPLSPLFSYQPKGKNNA.

Residues D43 to E45 and R102 to Q103 each bind ATP. H136 is a binding site for Mg(2+). Residues D225 and N229–T233 contribute to the D-ribose 5-phosphate site.

The protein belongs to the ribose-phosphate pyrophosphokinase family. Class I subfamily. In terms of assembly, homohexamer. Requires Mg(2+) as cofactor.

Its subcellular location is the cytoplasm. The enzyme catalyses D-ribose 5-phosphate + ATP = 5-phospho-alpha-D-ribose 1-diphosphate + AMP + H(+). Its pathway is metabolic intermediate biosynthesis; 5-phospho-alpha-D-ribose 1-diphosphate biosynthesis; 5-phospho-alpha-D-ribose 1-diphosphate from D-ribose 5-phosphate (route I): step 1/1. Involved in the biosynthesis of the central metabolite phospho-alpha-D-ribosyl-1-pyrophosphate (PRPP) via the transfer of pyrophosphoryl group from ATP to 1-hydroxyl of ribose-5-phosphate (Rib-5-P). This Streptococcus pyogenes serotype M3 (strain SSI-1) protein is Putative ribose-phosphate pyrophosphokinase 2.